Here is a 339-residue protein sequence, read N- to C-terminus: DNA-directed RNA polymerase subunit alpha (339 aa).

The tract at residues 1 to 233 (MVREEVAGST…DLFLPFLHAE (233 aa)) is alpha N-terminal domain (alpha-NTD). The interval 264–339 (KKGIPLNCIF…IDLLKNKLSF (76 aa)) is alpha C-terminal domain (alpha-CTD).

This sequence belongs to the RNA polymerase alpha chain family. As to quaternary structure, in plastids the minimal PEP RNA polymerase catalytic core is composed of four subunits: alpha, beta, beta', and beta''. When a (nuclear-encoded) sigma factor is associated with the core the holoenzyme is formed, which can initiate transcription.

Its subcellular location is the plastid. It localises to the chloroplast. It catalyses the reaction RNA(n) + a ribonucleoside 5'-triphosphate = RNA(n+1) + diphosphate. Its function is as follows. DNA-dependent RNA polymerase catalyzes the transcription of DNA into RNA using the four ribonucleoside triphosphates as substrates. The polypeptide is DNA-directed RNA polymerase subunit alpha (Thinopyrum elongatum (Tall wheatgrass)).